Reading from the N-terminus, the 398-residue chain is Bifunctional enzyme IspD/IspF (398 aa).

The segment at 1 to 234 (MTNSPRTAAI…SRLMAALGDI (234 aa)) is 2-C-methyl-D-erythritol 4-phosphate cytidylyltransferase. The 2-C-methyl-D-erythritol 2,4-cyclodiphosphate synthase stretch occupies residues 235–398 (RTGTGYDVHA…LPWGADGLAG (164 aa)). The a divalent metal cation site is built by Asp241 and His243. Residues 241–243 (DVH) and 267–268 (HS) contribute to the 4-CDP-2-C-methyl-D-erythritol 2-phosphate site. His275 serves as a coordination point for a divalent metal cation. 4-CDP-2-C-methyl-D-erythritol 2-phosphate contacts are provided by residues 289 to 291 (DIG), 365 to 368 (TTSE), Phe372, and Arg375.

This sequence in the N-terminal section; belongs to the IspD/TarI cytidylyltransferase family. IspD subfamily. The protein in the C-terminal section; belongs to the IspF family. The cofactor is a divalent metal cation.

The enzyme catalyses 2-C-methyl-D-erythritol 4-phosphate + CTP + H(+) = 4-CDP-2-C-methyl-D-erythritol + diphosphate. It catalyses the reaction 4-CDP-2-C-methyl-D-erythritol 2-phosphate = 2-C-methyl-D-erythritol 2,4-cyclic diphosphate + CMP. It participates in isoprenoid biosynthesis; isopentenyl diphosphate biosynthesis via DXP pathway; isopentenyl diphosphate from 1-deoxy-D-xylulose 5-phosphate: step 2/6. It functions in the pathway isoprenoid biosynthesis; isopentenyl diphosphate biosynthesis via DXP pathway; isopentenyl diphosphate from 1-deoxy-D-xylulose 5-phosphate: step 4/6. Its function is as follows. Bifunctional enzyme that catalyzes the formation of 4-diphosphocytidyl-2-C-methyl-D-erythritol from CTP and 2-C-methyl-D-erythritol 4-phosphate (MEP) (IspD), and catalyzes the conversion of 4-diphosphocytidyl-2-C-methyl-D-erythritol 2-phosphate (CDP-ME2P) to 2-C-methyl-D-erythritol 2,4-cyclodiphosphate (ME-CPP) with a corresponding release of cytidine 5-monophosphate (CMP) (IspF). The sequence is that of Bifunctional enzyme IspD/IspF from Rhodopseudomonas palustris (strain TIE-1).